The sequence spans 195 residues: ATP-dependent Clp protease proteolytic subunit (195 aa).

The Nucleophile role is filled by Ser-98. The active site involves His-123.

This sequence belongs to the peptidase S14 family. In terms of assembly, fourteen ClpP subunits assemble into 2 heptameric rings which stack back to back to give a disk-like structure with a central cavity, resembling the structure of eukaryotic proteasomes.

Its subcellular location is the cytoplasm. It catalyses the reaction Hydrolysis of proteins to small peptides in the presence of ATP and magnesium. alpha-casein is the usual test substrate. In the absence of ATP, only oligopeptides shorter than five residues are hydrolyzed (such as succinyl-Leu-Tyr-|-NHMec, and Leu-Tyr-Leu-|-Tyr-Trp, in which cleavage of the -Tyr-|-Leu- and -Tyr-|-Trp bonds also occurs).. Its function is as follows. Cleaves peptides in various proteins in a process that requires ATP hydrolysis. Has a chymotrypsin-like activity. Plays a major role in the degradation of misfolded proteins. This Staphylococcus aureus (strain Mu3 / ATCC 700698) protein is ATP-dependent Clp protease proteolytic subunit.